We begin with the raw amino-acid sequence, 428 residues long: MDSLWGPGAGSHPFGVHNSRLSPDLCPGKIVLRALKESGAGMPEQDKDPRVQENPGDQRRVPEVTGDAPSAFRPLRDNGGLSPFVPGPGPLQTDLHAQRSEIRYNQTSQTSWTSSCTNRNAISSSYSSTGGLPGLKRRRGPASSHCQLTLSSSKTVSEDRPQAVSSGHTQCEKVAEIAPGQTLALRNDSSRSEASRPSTRKFPLLPRRRGEPLMLPPPVELGYRVTAEDLDWEKEAAFQCIKSALQVEDKAISDCRPSRPSHTLSSLATGASGLPAVSKAPSMDAQQERHKSQDCLGLVAPLASATEVPSTAPMSGEKHRPPGPLFSSSDPLPATSSHSQDSAQVTSLIPAPFPAASMDAGMRRTRPGTSAPAAAAAAPPPSTLNRTLGSLLEWMEALHISGPQPQLQQVPRGQNQRSQTSRTSSCPK.

Disordered stretches follow at residues 1–23, 36–204, 254–293, 306–384, and 402–428; these read MDSL…RLSP, KESG…KFPL, DCRP…HKSQ, TEVP…PSTL, and GPQP…SCPK. Residues 44–62 show a composition bias toward basic and acidic residues; sequence EQDKDPRVQENPGDQRRVP. The segment covering 106–117 has biased composition (low complexity); sequence QTSQTSWTSSCT. 5 stretches are compositionally biased toward polar residues: residues 118–129, 144–155, 260–269, 326–347, and 403–415; these read NRNAISSSYSST, SHCQLTLSSSKT, PSHTLSSLAT, FSSS…QVTS, and PQPQ…RGQN. Residues 416–428 show a composition bias toward low complexity; it reads QRSQTSRTSSCPK.

It belongs to the POM121 family.

The protein is Putative POM121-like protein 1 (POM121L1P) of Homo sapiens (Human).